Reading from the N-terminus, the 193-residue chain is HMG-Y-related protein A (193 aa).

Residues 11 to 81 (PIPPYPEMIL…LKNNYFRAGA (71 aa)) enclose the H15 domain. Residues 75–193 (NYFRAGAPDA…PAVPSETAAA (119 aa)) are disordered. The short motif at 86–92 (PKRGRGR) is the Nuclear localization signal 1 (NLS) element. 4 DNA-binding regions (a.T hook) span residues 87–98 (KRGRGRPPKARD), 113–124 (GRGRGRPPKAKS), 138–149 (PKPRGRPPKKAK), and 173–184 (KRGRGRPPKVRP). Positions 145–149 (PKKAK) match the Nuclear localization signal 2 (NLS) motif.

The protein belongs to the histone H1/H5 family. Phosphorylated by CDK, this phosphorylation prevents DNA-binding. Motility is increased when hypophosphorylated. Post-translationally, acetylated.

It is found in the nucleus. Its subcellular location is the nucleolus. Its function is as follows. Binds A/T-rich DNA (e.g. present in the storage gamma-zein gene promoter) with a highly dynamic distribution into the nucleus. Probably involved in endosperm development, during cells shift from a mitotic cycle to endoreduplication leading to massive synthesis of storage proteins (zeins) and starch. The chain is HMG-Y-related protein A from Zea mays (Maize).